The following is a 485-amino-acid chain: MSVWDSISFNNRFTALPRLFYTPIQPTPLNNVQWLAWNHNLANELGFPSFECTSEELLETLSGNVEPEQFSPVAMKYAGHQFGSYNPDLGDGRGLLLAQVVAKSGETFDLHLKGAGKTPYSRMGDGRAVIRSTVREYLCSEAMAGLNIPTTRALAMMTSDTPVYREKQEWGALLVRAAESHIRFGHFEHLFYTNQLAEHKLLADKVIEWHFPECLDDDKPYAAMFNQIVDRTAEMVALWQANGFAHGVMNTDNMSIIGQTFDYGPFAFLDEYDPRLICNHSDYQGRYAFNQQPRIGLWNLSALAHSLSPLVDKADLEAALEQYEPQMNGYFSQLMRRKLGLLSKHEGDSRLFESMFELMSQNKVDYPRFFRTLSNLDTLLPQDVIDLVIDREAAKLWVDNYLQRCELEESSVAERCEKMRQVNPKYILRNYLAQLAIDKAERGDSSDIDALMVVLADPYAEHPDYEHLAALPPEWGKAMEISCSS.

ATP contacts are provided by glycine 90, glycine 92, arginine 93, lysine 113, aspartate 125, glycine 126, arginine 176, and arginine 183. Catalysis depends on aspartate 252, which acts as the Proton acceptor. The Mg(2+) site is built by asparagine 253 and aspartate 262. ATP is bound at residue aspartate 262.

It belongs to the SELO family. It depends on Mg(2+) as a cofactor. Mn(2+) is required as a cofactor.

It catalyses the reaction L-seryl-[protein] + ATP = 3-O-(5'-adenylyl)-L-seryl-[protein] + diphosphate. The enzyme catalyses L-threonyl-[protein] + ATP = 3-O-(5'-adenylyl)-L-threonyl-[protein] + diphosphate. The catalysed reaction is L-tyrosyl-[protein] + ATP = O-(5'-adenylyl)-L-tyrosyl-[protein] + diphosphate. It carries out the reaction L-histidyl-[protein] + UTP = N(tele)-(5'-uridylyl)-L-histidyl-[protein] + diphosphate. It catalyses the reaction L-seryl-[protein] + UTP = O-(5'-uridylyl)-L-seryl-[protein] + diphosphate. The enzyme catalyses L-tyrosyl-[protein] + UTP = O-(5'-uridylyl)-L-tyrosyl-[protein] + diphosphate. Functionally, nucleotidyltransferase involved in the post-translational modification of proteins. It can catalyze the addition of adenosine monophosphate (AMP) or uridine monophosphate (UMP) to a protein, resulting in modifications known as AMPylation and UMPylation. This chain is Protein nucleotidyltransferase YdiU, found in Vibrio atlanticus (strain LGP32) (Vibrio splendidus (strain Mel32)).